We begin with the raw amino-acid sequence, 1258 residues long: uncharacterized protein (1258 aa).

Residues 55-93 (ELASEILGVCWQENGVLAAGISEGTWKRFLAGKQAINAE) form a WD 1 repeat. Residues 112-128 (GGRTKERKDTGTSRQEK) are compositionally biased toward basic and acidic residues. A disordered region spans residues 112-138 (GGRTKERKDTGTSRQEKFLSSSHPHTD). 14 WD repeats span residues 640-679 (ETLGNILSAAFSPEGQLLATCDTDCHVRVWEVKSGKLLLI), 682-721 (GHSNWVRFVVFSPDGEILASCGADENVKLWSVRDGVCIKT), 724-763 (GHEHEVFSVAFHPDGETLASASGDKTIKLWDIQDGTCLQT), 766-807 (GHTD…RTLK), 809-849 (HTGW…KTYI), 850-889 (GHTNSVYSIAYSPDSKILVSGSGDRTIKLWDCQTHICIKT), 892-931 (GHTNEVCSVAFSPDGQTLACVSLDQSVRLWNCRTGQCLKA), 934-975 (GNTD…SSLE), 976-1017 (GHTD…QILL), 1019-1059 (HTDW…KTLS), 1060-1101 (EHSD…GILR), 1103-1143 (HSNR…KTLT), 1144-1183 (GHTNWVFDIAFSPDGKILASASHDQTVRIWDVNTGKCHHI), and 1186-1227 (GHTH…QILR).

This is an uncharacterized protein from Nostoc sp. (strain PCC 7120 / SAG 25.82 / UTEX 2576).